The sequence spans 189 residues: ATP-dependent protease subunit HslV (189 aa).

Residue threonine 12 is part of the active site. Na(+) contacts are provided by serine 172, cysteine 175, and threonine 178.

Belongs to the peptidase T1B family. HslV subfamily. In terms of assembly, a double ring-shaped homohexamer of HslV is capped on each side by a ring-shaped HslU homohexamer. The assembly of the HslU/HslV complex is dependent on binding of ATP.

Its subcellular location is the cytoplasm. It catalyses the reaction ATP-dependent cleavage of peptide bonds with broad specificity.. Its activity is regulated as follows. Allosterically activated by HslU binding. Functionally, protease subunit of a proteasome-like degradation complex believed to be a general protein degrading machinery. This Ehrlichia chaffeensis (strain ATCC CRL-10679 / Arkansas) protein is ATP-dependent protease subunit HslV.